The following is a 312-amino-acid chain: Glycerol-3-phosphate dehydrogenase [NAD(P)+] (312 aa).

Residues W11, R30, R31, and K95 each contribute to the NADPH site. Positions 95, 123, and 125 each coordinate sn-glycerol 3-phosphate. A127 contacts NADPH. K177, D230, S240, R241, and N242 together coordinate sn-glycerol 3-phosphate. Catalysis depends on K177, which acts as the Proton acceptor. R241 serves as a coordination point for NADPH. Residues V265 and E267 each coordinate NADPH.

Belongs to the NAD-dependent glycerol-3-phosphate dehydrogenase family.

Its subcellular location is the cytoplasm. The catalysed reaction is sn-glycerol 3-phosphate + NAD(+) = dihydroxyacetone phosphate + NADH + H(+). It catalyses the reaction sn-glycerol 3-phosphate + NADP(+) = dihydroxyacetone phosphate + NADPH + H(+). It participates in membrane lipid metabolism; glycerophospholipid metabolism. Its function is as follows. Catalyzes the reduction of the glycolytic intermediate dihydroxyacetone phosphate (DHAP) to sn-glycerol 3-phosphate (G3P), the key precursor for phospholipid synthesis. In Helicobacter pylori (strain P12), this protein is Glycerol-3-phosphate dehydrogenase [NAD(P)+].